Here is a 226-residue protein sequence, read N- to C-terminus: Large ribosomal subunit protein uL1 (226 aa).

It belongs to the universal ribosomal protein uL1 family. Part of the 50S ribosomal subunit.

Its function is as follows. Binds directly to 23S rRNA. The L1 stalk is quite mobile in the ribosome, and is involved in E site tRNA release. Protein L1 is also a translational repressor protein, it controls the translation of the L11 operon by binding to its mRNA. This is Large ribosomal subunit protein uL1 from Treponema denticola (strain ATCC 35405 / DSM 14222 / CIP 103919 / JCM 8153 / KCTC 15104).